A 33-amino-acid chain; its full sequence is Photosystem II reaction center protein Psb30 (33 aa).

A helical transmembrane segment spans residues 5-25 (LIVQLGSLALITVAGPAIIVL).

This sequence belongs to the Psb30/Ycf12 family. As to quaternary structure, PSII is composed of 1 copy each of membrane proteins PsbA, PsbB, PsbC, PsbD, PsbE, PsbF, PsbH, PsbI, PsbJ, PsbK, PsbL, PsbM, PsbT, PsbY, PsbZ, Psb30/Ycf12, peripheral proteins of the oxygen-evolving complex and a large number of cofactors. It forms dimeric complexes.

Its subcellular location is the plastid. The protein localises to the chloroplast thylakoid membrane. Its function is as follows. A core subunit of photosystem II (PSII), probably helps stabilize the reaction center. This Euglena stellata protein is Photosystem II reaction center protein Psb30.